The chain runs to 319 residues: ATP-dependent 6-phosphofructokinase (319 aa).

Position 11 (Gly11) interacts with ATP. 21–25 provides a ligand contact to ADP; that stretch reads RAVVR. Residues 72 to 73 and 102 to 105 contribute to the ATP site; these read RC and GDGS. Asp103 serves as a coordination point for Mg(2+). Position 125–127 (125–127) interacts with substrate; it reads TID. The active-site Proton acceptor is Asp127. Arg154 contacts ADP. Residues Arg162 and 169–171 contribute to the substrate site; that span reads MGR. ADP contacts are provided by residues 185-187, Arg211, and 213-215; these read GAE and KKH. Substrate is bound by residues Glu222, Arg243, and 249 to 252; that span reads HVQR.

It belongs to the phosphofructokinase type A (PFKA) family. ATP-dependent PFK group I subfamily. Prokaryotic clade 'B1' sub-subfamily. As to quaternary structure, homotetramer. Requires Mg(2+) as cofactor.

It is found in the cytoplasm. The catalysed reaction is beta-D-fructose 6-phosphate + ATP = beta-D-fructose 1,6-bisphosphate + ADP + H(+). The protein operates within carbohydrate degradation; glycolysis; D-glyceraldehyde 3-phosphate and glycerone phosphate from D-glucose: step 3/4. Its activity is regulated as follows. Allosterically activated by ADP and other diphosphonucleosides, and allosterically inhibited by phosphoenolpyruvate. In terms of biological role, catalyzes the phosphorylation of D-fructose 6-phosphate to fructose 1,6-bisphosphate by ATP, the first committing step of glycolysis. The chain is ATP-dependent 6-phosphofructokinase from Bacillus cereus (strain ATCC 14579 / DSM 31 / CCUG 7414 / JCM 2152 / NBRC 15305 / NCIMB 9373 / NCTC 2599 / NRRL B-3711).